Consider the following 203-residue polypeptide: N-(5'-phosphoribosyl)anthranilate isomerase (203 aa).

This sequence belongs to the TrpF family.

The enzyme catalyses N-(5-phospho-beta-D-ribosyl)anthranilate = 1-(2-carboxyphenylamino)-1-deoxy-D-ribulose 5-phosphate. The protein operates within amino-acid biosynthesis; L-tryptophan biosynthesis; L-tryptophan from chorismate: step 3/5. This Caldanaerobacter subterraneus subsp. tengcongensis (strain DSM 15242 / JCM 11007 / NBRC 100824 / MB4) (Thermoanaerobacter tengcongensis) protein is N-(5'-phosphoribosyl)anthranilate isomerase.